Here is a 292-residue protein sequence, read N- to C-terminus: Acetyl-coenzyme A carboxylase carboxyl transferase subunit beta (292 aa).

The CoA carboxyltransferase N-terminal domain occupies 23-292 (VWSKCTACGN…TEATEVSVNE (270 aa)). Zn(2+) contacts are provided by cysteine 27, cysteine 30, cysteine 46, and cysteine 49. The C4-type zinc finger occupies 27–49 (CTACGNIIYKADLERSLNVCPKC).

Belongs to the AccD/PCCB family. Acetyl-CoA carboxylase is a heterohexamer composed of biotin carboxyl carrier protein (AccB), biotin carboxylase (AccC) and two subunits each of ACCase subunit alpha (AccA) and ACCase subunit beta (AccD). Zn(2+) serves as cofactor.

The protein resides in the cytoplasm. It catalyses the reaction N(6)-carboxybiotinyl-L-lysyl-[protein] + acetyl-CoA = N(6)-biotinyl-L-lysyl-[protein] + malonyl-CoA. The protein operates within lipid metabolism; malonyl-CoA biosynthesis; malonyl-CoA from acetyl-CoA: step 1/1. In terms of biological role, component of the acetyl coenzyme A carboxylase (ACC) complex. Biotin carboxylase (BC) catalyzes the carboxylation of biotin on its carrier protein (BCCP) and then the CO(2) group is transferred by the transcarboxylase to acetyl-CoA to form malonyl-CoA. The chain is Acetyl-coenzyme A carboxylase carboxyl transferase subunit beta from Idiomarina loihiensis (strain ATCC BAA-735 / DSM 15497 / L2-TR).